Reading from the N-terminus, the 213-residue chain is Ras-like protein rasU (213 aa).

Gly21–Thr28 contacts GTP. An Effector region motif is present at residues Tyr43–Tyr51. Residues Asp68–Gln72 and Asn126–Asp129 contribute to the GTP site. At Cys210 the chain carries Cysteine methyl ester. A lipid anchor (S-geranylgeranyl cysteine) is attached at Cys210. Positions Lys211–Ile213 are cleaved as a propeptide — removed in mature form.

This sequence belongs to the small GTPase superfamily. Ras family.

It is found in the cell membrane. The catalysed reaction is GTP + H2O = GDP + phosphate + H(+). In terms of biological role, ras proteins bind GDP/GTP and possess intrinsic GTPase activity. This is Ras-like protein rasU (rasU) from Dictyostelium discoideum (Social amoeba).